The chain runs to 655 residues: Squalene-tetrahymanol cyclase THC1 (655 aa).

The signal sequence occupies residues 1-20; sequence MKKILIGLIIGLFLFSSVNA. Residues N23, N44, N69, and N77 are each glycosylated (N-linked (GlcNAc...) asparagine). D373 (proton donor) is an active-site residue. PFTB repeat units lie at residues 393 to 435 and 515 to 562; these read IPET…GIAN and VQNS…GLLA.

It belongs to the terpene cyclase/mutase family.

It localises to the membrane. It carries out the reaction tetrahymanol = squalene + H2O. 2,3-iminosqualene and N,N-dimethyldodecylamine~N-oxlde are effective inhibitors with IC(50) values of 50 and 30 nM, respectively. Squalene cyclase that catalyzes the oxygen-independent cyclization of squalene into tetrahymanol, a triterpenoid sterol with five cyclohexyl rings that is involved in membrane integrity, permeability and fluidity. This is Squalene-tetrahymanol cyclase THC1 from Tetrahymena thermophila (strain SB210).